We begin with the raw amino-acid sequence, 417 residues long: Phosphoglycerate kinase, cytosolic (417 aa).

(2R)-3-phosphoglycerate-binding residues include V23, D24, F25, N26, R39, S61, H62, G64, R65, R132, H168, and R169. The ADP site is built by G214 and A215. G214 provides a ligand contact to CDP. The AMP site is built by A215 and K216. A215 provides a ligand contact to ATP. A215 is a binding site for Mg(2+). A (2R)-3-phosphoglycerate-binding site is contributed by K216. D219 serves as a coordination point for CDP. D219 provides a ligand contact to Mg(2+). 2 residues coordinate ADP: K220 and G238. K220 serves as a coordination point for AMP. Position 220 (K220) interacts with ATP. G238 is a binding site for CDP. Residues A239 and A311 each contribute to the AMP site. ATP is bound by residues A239 and A311. Positions 311 and 335 each coordinate ADP. CDP-binding residues include G336 and F341. F341, E342, D374, and T375 together coordinate ADP. E342 contacts AMP. Residues E342, D374, and T375 each coordinate ATP. Residue D374 participates in Mg(2+) binding.

It belongs to the phosphoglycerate kinase family. As to quaternary structure, monomer. Requires Mg(2+) as cofactor.

The protein localises to the cytoplasm. It carries out the reaction (2R)-3-phosphoglycerate + ATP = (2R)-3-phospho-glyceroyl phosphate + ADP. The protein operates within carbohydrate degradation; glycolysis; pyruvate from D-glyceraldehyde 3-phosphate: step 2/5. This is Phosphoglycerate kinase, cytosolic (PGKB) from Crithidia fasciculata.